The chain runs to 393 residues: Phosphoglycerate kinase (393 aa).

Substrate-binding positions include 22–24 (DFN), R37, 60–63 (HLGR), R119, and R152. ATP is bound by residues K202, G293, E324, and 350–353 (GGDS).

This sequence belongs to the phosphoglycerate kinase family. In terms of assembly, monomer.

The protein localises to the cytoplasm. It catalyses the reaction (2R)-3-phosphoglycerate + ATP = (2R)-3-phospho-glyceroyl phosphate + ADP. It functions in the pathway carbohydrate degradation; glycolysis; pyruvate from D-glyceraldehyde 3-phosphate: step 2/5. In Borrelia garinii subsp. bavariensis (strain ATCC BAA-2496 / DSM 23469 / PBi) (Borreliella bavariensis), this protein is Phosphoglycerate kinase.